A 244-amino-acid chain; its full sequence is Carboxy-S-adenosyl-L-methionine synthase (244 aa).

S-adenosyl-L-methionine is bound by residues tyrosine 41, 66-68, asparagine 134, and arginine 201; that span reads GCS.

This sequence belongs to the class I-like SAM-binding methyltransferase superfamily. Cx-SAM synthase family. Homodimer.

It carries out the reaction prephenate + S-adenosyl-L-methionine = carboxy-S-adenosyl-L-methionine + 3-phenylpyruvate + H2O. In terms of biological role, catalyzes the conversion of S-adenosyl-L-methionine (SAM) to carboxy-S-adenosyl-L-methionine (Cx-SAM). The sequence is that of Carboxy-S-adenosyl-L-methionine synthase from Cellvibrio japonicus (strain Ueda107) (Pseudomonas fluorescens subsp. cellulosa).